The chain runs to 579 residues: Protein alan shepard (579 aa).

The segment covering 1–12 (MHPRYSPAPPPQ) has biased composition (pro residues). The disordered stretch occupies residues 1–66 (MHPRYSPAPP…GSSSSAAAAP (66 aa)). Phosphotyrosine is present on Tyr-5. The segment covering 13-24 (QQQQMGGPPHQQ) has biased composition (low complexity). The segment covering 25–35 (QGGGGGGGGSM) has biased composition (gly residues). Polar residues predominate over residues 37–54 (GPSNAQQLPPQIPRSQNY). Residues 55–66 (SNGSSSSAAAAP) are compositionally biased toward low complexity. Residues Tyr-125 and Tyr-142 each carry the phosphotyrosine modification. The interval 164–225 (PATTTYGQRV…TVQNQNQQGG (62 aa)) is disordered. A compositionally biased stretch (low complexity) spans 178-225 (SPSNTNSSSSSNTGSQSGTLSTSLSNTTNTNTNMGPNGTVQNQNQQGG). 2 RRM domains span residues 231 to 304 (TNLY…MAKQ) and 310 to 389 (TNLY…FADG). The interval 553–579 (MTDSEQASTAASPDEAYTQYPHQAAPK) is disordered.

Functionally, has a role in the perception of gravity. This Drosophila sechellia (Fruit fly) protein is Protein alan shepard.